Here is a 487-residue protein sequence, read N- to C-terminus: Aromatic-L-amino-acid decarboxylase (487 aa).

Methionine 1 carries the N-acetylmethionine modification. 2 repeat units span residues glutamate 58 to glutamate 115 and methionine 118 to alanine 178. A 2 X approximate tandem repeats region spans residues glutamate 58–alanine 178. Threonine 82 contributes to the substrate binding site. The pyridoxal 5'-phosphate site is built by alanine 148 and serine 149. Histidine 192 contacts substrate. Pyridoxal 5'-phosphate contacts are provided by threonine 246 and asparagine 300. N6-(pyridoxal phosphate)lysine is present on lysine 303.

The protein belongs to the group II decarboxylase family. As to quaternary structure, homodimer. Pyridoxal 5'-phosphate is required as a cofactor.

The enzyme catalyses L-dopa + H(+) = dopamine + CO2. It carries out the reaction 5-hydroxy-L-tryptophan + H(+) = serotonin + CO2. The protein operates within catecholamine biosynthesis; dopamine biosynthesis; dopamine from L-tyrosine: step 2/2. Catalyzes the decarboxylation of L-3,4-dihydroxyphenylalanine (DOPA) to dopamine and L-5-hydroxytryptophan to serotonin. In Bos taurus (Bovine), this protein is Aromatic-L-amino-acid decarboxylase (DDC).